We begin with the raw amino-acid sequence, 560 residues long: Vacuolar protein 8 (560 aa).

Gly-2 carries the N-myristoyl glycine lipid modification. Cys-4 is lipidated: S-palmitoyl cysteine. ARM repeat units follow at residues 39 to 76 (NRAETDFFSGEPLRALSTLVYSDNIDLQRSASLTFAEI), 77 to 116 (TERDVRAVDRDTLGPILFLLENSDIEVQRAASAALGNLAV), 118 to 157 (TDNKVLIVQLGGLQPLIKQMMSPNVEVQCNAVGCITNLAT), 159 to 198 (EENKAKIARSGALGPLTRLAKSKDMRVQRNATGALLNMTH), 200 to 239 (DENRQQLVNAGAIPVLVQLLSSSDVDVQYYCTTALSNIAV), 243 to 282 (NRRKLAETEQRLVQYLVNLTESSSPKVQCQAALALRNLAS), 284 to 323 (EKYQLEIVQAHGLGPLLRLLRSSYLPLILSAVACIRNISI), 325 to 365 (PQNE…NLAA), and 409 to 448 (DELKTHLLELGVFDVLIPLTMSPSVEVQGNSAAALGNLSS).

The protein belongs to the beta-catenin family.

It is found in the vacuole membrane. Functionally, functions in both vacuole inheritance and protein targeting from the cytoplasm to vacuole. This Chaetomium globosum (strain ATCC 6205 / CBS 148.51 / DSM 1962 / NBRC 6347 / NRRL 1970) (Soil fungus) protein is Vacuolar protein 8 (VAC8).